We begin with the raw amino-acid sequence, 209 residues long: Peroxiredoxin (209 aa).

The Thioredoxin domain maps to 2–156; that stretch reads PLIGDKFPEM…IVRMIRAFRV (155 aa). Cys-44 acts as the Cysteine sulfenic acid (-SOH) intermediate in catalysis. Arg-119 is a binding site for substrate. An intrachain disulfide couples Cys-198 to Cys-204.

The protein belongs to the peroxiredoxin family. Prx6 subfamily. In terms of assembly, homodecamer. Pentamer of dimers that assemble into a ring structure.

It is found in the cytoplasm. It carries out the reaction a hydroperoxide + [thioredoxin]-dithiol = an alcohol + [thioredoxin]-disulfide + H2O. In terms of biological role, thiol-specific peroxidase that catalyzes the reduction of hydrogen peroxide and organic hydroperoxides to water and alcohols, respectively. Plays a role in cell protection against oxidative stress by detoxifying peroxides. This chain is Peroxiredoxin, found in Methanothermobacter thermautotrophicus (strain ATCC 29096 / DSM 1053 / JCM 10044 / NBRC 100330 / Delta H) (Methanobacterium thermoautotrophicum).